Here is a 31-residue protein sequence, read N- to C-terminus: Monocyclic monoterpene ketone monooxygenase (31 aa).

20–25 lines the FAD pocket; it reads GAGFXG.

Monomer. Requires FAD as cofactor.

The enzyme catalyses 1-hydroxylimonen-2-one + NADPH + O2 = 3-isopropenyl-6-oxoheptanoate + NADP(+) + H2O. It carries out the reaction (1R,4S)-1-hydroxylimonen-2-one + NADPH + O2 + H(+) = (4S,7S)-7-hydroxy-4-isopropenyl-7-methyloxepan-2-one + NADP(+) + H2O. It catalyses the reaction (1S,4R)-1-hydroxylimonen-2-one + NADPH + O2 + H(+) = (4R,7R)-7-hydroxy-4-isopropenyl-7-methyloxepan-2-one + NADP(+) + H2O. The catalysed reaction is (1R,4R)-dihydrocarvone + NADPH + O2 + H(+) = (4R,7R)-4-isopropenyl-7-methyloxepan-2-one + NADP(+) + H2O. The enzyme catalyses (1S,4R)-menthone + NADPH + O2 + H(+) = (4S,7R)-7-isopropyl-4-methyloxepan-2-one + NADP(+) + H2O. It carries out the reaction (1R,4S)-menthone + NADPH + O2 + H(+) = (4R,7S)-7-isopropyl-4-methyloxepan-2-one + NADP(+) + H2O. It catalyses the reaction (1S,4R)-isodihydrocarvone + NADPH + O2 + H(+) = (3S,6R)-6-isopropenyl-3-methyloxepan-2-one + NADP(+) + H2O. It functions in the pathway terpene metabolism; monoterpene degradation. Its function is as follows. Catalyzes the NADPH- and oxygen-dependent oxidation of the monocyclic monoterpene ketones 1-hydroxy-2-oxolimonene, dihydrocarvone and menthone. Is able to convert all enantiomers of these natural substrates with almost equal efficiency. Is thus involved in the conversion of the monocyclic monoterpene ketone intermediates formed in the degradation pathways of all stereoisomers of three different monocyclic monoterpenes, i.e. limonene, (dihydro)carveol and menthol, which likely make R.erythropolis able to grow on these compounds as the sole source of carbon and energy. In Rhodococcus erythropolis (Arthrobacter picolinophilus), this protein is Monocyclic monoterpene ketone monooxygenase.